Reading from the N-terminus, the 155-residue chain is Endoribonuclease YbeY (155 aa).

Residues His120, His124, and His130 each coordinate Zn(2+).

The protein belongs to the endoribonuclease YbeY family. It depends on Zn(2+) as a cofactor.

It localises to the cytoplasm. In terms of biological role, single strand-specific metallo-endoribonuclease involved in late-stage 70S ribosome quality control and in maturation of the 3' terminus of the 16S rRNA. The chain is Endoribonuclease YbeY from Borreliella burgdorferi (strain ATCC 35210 / DSM 4680 / CIP 102532 / B31) (Borrelia burgdorferi).